A 238-amino-acid polypeptide reads, in one-letter code: MGRAYQNRKDSIAKTANAKSKVYSRYGREIYVCAKQGGGDPDGNLALRGLIDRAKKDQVPAHVIEKAIDKAQGGAGEDFSPARYEGYGPSNCMVIVECLTDNPNRTFGDVRNCFTKSKSKIGAQGSVAHSFDHCAIFAFRHDNEDEVLEAMMEADVDVTDVEFEDGLVTVFAPNTEYAAARQALTHAFPDIDFEADEIQFLPQVTTSIAEDDLPMFERLMDMLNDLDDVQNIYHNAEH.

It belongs to the TACO1 family.

The protein resides in the cytoplasm. The chain is Probable transcriptional regulatory protein IL0164 from Idiomarina loihiensis (strain ATCC BAA-735 / DSM 15497 / L2-TR).